A 201-amino-acid chain; its full sequence is Cytochrome c biogenesis ATP-binding export protein CcmA (201 aa).

The 198-residue stretch at 3–200 folds into the ABC transporter domain; that stretch reads LIAENLGGER…EGAELRMGVA (198 aa). 35–42 contacts ATP; it reads GPNGSGKS.

It belongs to the ABC transporter superfamily. CcmA exporter (TC 3.A.1.107) family. In terms of assembly, the complex is composed of two ATP-binding proteins (CcmA) and two transmembrane proteins (CcmB).

It is found in the cell inner membrane. It carries out the reaction heme b(in) + ATP + H2O = heme b(out) + ADP + phosphate + H(+). Its function is as follows. Part of the ABC transporter complex CcmAB involved in the biogenesis of c-type cytochromes; once thought to export heme, this seems not to be the case, but its exact role is uncertain. Responsible for energy coupling to the transport system. In Mesorhizobium japonicum (strain LMG 29417 / CECT 9101 / MAFF 303099) (Mesorhizobium loti (strain MAFF 303099)), this protein is Cytochrome c biogenesis ATP-binding export protein CcmA.